The following is a 533-amino-acid chain: Retinoid isomerohydrolase (533 aa).

Ser-2 is subject to N-acetylserine. The S-palmitoyl cysteine; in membrane form moiety is linked to residue Cys-112. His-180 lines the Fe cation pocket. The S-palmitoyl cysteine; in membrane form moiety is linked to residue Cys-231. Fe cation contacts are provided by His-241 and His-313. Residues Cys-329 and Cys-330 are each lipidated (S-palmitoyl cysteine; in membrane form). Residue His-527 participates in Fe cation binding.

It belongs to the carotenoid oxygenase family. Fe(2+) serves as cofactor. Palmitoylation by LRAT regulates ligand binding specificity; the palmitoylated form (membrane form) specifically binds all-trans-retinyl-palmitate, while the soluble unpalmitoylated form binds all-trans-retinol (vitamin A). Retinal pigment epithelium specific.

It is found in the cell membrane. It carries out the reaction an all-trans-retinyl ester + H2O = 11-cis-retinol + a fatty acid + H(+). The enzyme catalyses lutein = (3R,3'S)-zeaxanthin. It catalyses the reaction all-trans-retinyl hexadecanoate + H2O = 11-cis-retinol + hexadecanoate + H(+). Critical isomerohydrolase in the retinoid cycle involved in regeneration of 11-cis-retinal, the chromophore of rod and cone opsins. Catalyzes the cleavage and isomerization of all-trans-retinyl fatty acid esters to 11-cis-retinol which is further oxidized by 11-cis retinol dehydrogenase to 11-cis-retinal for use as visual chromophore. Essential for the production of 11-cis retinal for both rod and cone photoreceptors. Also capable of catalyzing the isomerization of lutein to meso-zeaxanthin an eye-specific carotenoid. The soluble form binds vitamin A (all-trans-retinol), making it available for LRAT processing to all-trans-retinyl ester. The membrane form, palmitoylated by LRAT, binds all-trans-retinyl esters, making them available for IMH (isomerohydrolase) processing to all-cis-retinol. The soluble form is regenerated by transferring its palmitoyl groups onto 11-cis-retinol, a reaction catalyzed by LRAT. The chain is Retinoid isomerohydrolase (RPE65) from Cynops pyrrhogaster (Japanese fire-bellied newt).